An 846-amino-acid polypeptide reads, in one-letter code: Integrin beta-PS (846 aa).

An N-terminal signal peptide occupies residues 1–28; the sequence is MILERNRRCQLALLMIAILAAIAGQTDA. Residues 29 to 777 are Extracellular-facing; sequence QKAAKLTAVS…NKECPAKVFM (749 aa). The cysteines at positions 46 and 55 are disulfide-linked. The N-linked (GlcNAc...) asparagine glycan is linked to Asn72. The VWFA domain occupies 186 to 419; it reads DLYYLMDLSK…ELVKEEYRKI (234 aa). A disulfide bond links Cys249 and Cys252. N-linked (GlcNAc...) asparagine glycans are attached at residues Asn266 and Asn277. A disulfide bond links Cys300 and Cys341. N-linked (GlcNAc...) asparagine glycans are attached at residues Asn403 and Asn428. Disulfide bonds link Cys441-Cys453, Cys473-Cys741, Cys507-Cys530, Cys522-Cys533, Cys535-Cys544, Cys546-Cys579, Cys561-Cys577, Cys571-Cys582, Cys584-Cys599, Cys601-Cys624, Cys606-Cys622, Cys614-Cys627, Cys629-Cys638, Cys640-Cys664, Cys647-Cys662, Cys656-Cys667, Cys669-Cys682, Cys685-Cys688, Cys692-Cys701, Cys698-Cys771, and Cys719-Cys749. I-EGF domains are found at residues 507–545, 546–600, 601–639, and 640–683; these read CENPGSIGYQVQANSCSGHGTSMCGICNCDDSYFGNKCE, CSAT…KHCE, CDNFSCERNRNQLCSGPDHGTCECGRCKCKPGWTGSNCG, and CQES…RHCE. N-linked (GlcNAc...) asparagine glycosylation is present at Asn557. A glycan (N-linked (GlcNAc...) asparagine) is linked at Asn603. A glycan (N-linked (GlcNAc...) asparagine) is linked at Asn644. N-linked (GlcNAc...) asparagine glycosylation occurs at Asn718. The helical transmembrane segment at 778 to 798 threads the bilayer; it reads LGIVMGVIAAIVLVGLAILLL. The Cytoplasmic portion of the chain corresponds to 799–846; the sequence is WKLLTTIHDRREFARFEKERMNAKWDTGENPIYKQATSTFKNPMYAGK. 2 positions are modified to phosphotyrosine: Tyr831 and Tyr843.

The protein belongs to the integrin beta chain family. Heterodimer of an alpha and a beta subunit. Beta-PS associates with either alpha-PS1, alpha-PS2, alpha-PS3, alpha-PS4 or alpha-PS5. In ovaries, strongly expressed in follicle cells. In oocytes, expressed in the forming dorsal appendages (at protein level). Expressed in the embryonic dorsal cuticle, the larval eye and the wing imaginal disk. In testes, detected at the interface between somatic hub cells and cyst stem cells.

It is found in the cell membrane. The protein resides in the apical cell membrane. Its subcellular location is the lateral cell membrane. It localises to the basal cell membrane. Integrin alpha-PS1/beta-PS is a receptor for laminin. Integrin alpha-PS2/beta-PS is a receptor for Tig, wb and Ten-m. Contributes to endodermal integrity and adhesion between the midgut epithelium and the surrounding visceral muscle. Essential for migration of the primordial midgut cells and for maintaining, but not establishing, cell polarity in the midgut epithelium. The two beta subunits mediate midgut migration by distinct mechanisms: beta-PS requires rhea/talin and Itgbn does not. Required for rhea/talin correct cellular localization in the midgut. Required for many embryonic (dorsal closure and somatic muscle attachments) and postembryonic developmental processes (attachment between cell layers of imaginal disks, organization of ommatidial arrays and flight muscle development). Involved in the function and/or development of the olfactory system. In the testes, essential for shv-dependent maintenance of somatic hub cells and their localization to the apical tip. Plays a role in timely border cell migration during oogenesis. The protein is Integrin beta-PS (mys) of Drosophila melanogaster (Fruit fly).